A 244-amino-acid polypeptide reads, in one-letter code: tRNA (guanine-N(1)-)-methyltransferase (244 aa).

Residues G110 and I129 to L134 each bind S-adenosyl-L-methionine.

Belongs to the RNA methyltransferase TrmD family. In terms of assembly, homodimer.

The protein resides in the cytoplasm. It carries out the reaction guanosine(37) in tRNA + S-adenosyl-L-methionine = N(1)-methylguanosine(37) in tRNA + S-adenosyl-L-homocysteine + H(+). Specifically methylates guanosine-37 in various tRNAs. The polypeptide is tRNA (guanine-N(1)-)-methyltransferase (Syntrophomonas wolfei subsp. wolfei (strain DSM 2245B / Goettingen)).